Reading from the N-terminus, the 443-residue chain is ATP-dependent protease ATPase subunit HslU (443 aa).

ATP is bound by residues Ile20, 62-67, Asp255, Glu321, and Arg393; that span reads GVGKTE.

Belongs to the ClpX chaperone family. HslU subfamily. In terms of assembly, a double ring-shaped homohexamer of HslV is capped on each side by a ring-shaped HslU homohexamer. The assembly of the HslU/HslV complex is dependent on binding of ATP.

It localises to the cytoplasm. ATPase subunit of a proteasome-like degradation complex; this subunit has chaperone activity. The binding of ATP and its subsequent hydrolysis by HslU are essential for unfolding of protein substrates subsequently hydrolyzed by HslV. HslU recognizes the N-terminal part of its protein substrates and unfolds these before they are guided to HslV for hydrolysis. This chain is ATP-dependent protease ATPase subunit HslU, found in Helicobacter pylori (strain P12).